The following is a 291-amino-acid chain: MERKRWECPALPQGWEREEVPRRSGLSAGHRDVFYYSPSGKKFRSKPQLARYLGGSMDLSTFDFRTGKMLMSKMNKSRQRVRYDSSNQVKGKPDLNTALPVRQTASIFKQPVTKITNHPSNKVKSDPQKAVDQPRQLFWEKKLSGLNAFDIAEELVKTMDLPKGLQGVGPGCTDETLLSAIASALHTSTMPITGQLSAAVEKNPGVWLNTTQPLCKAFMVTDEDIRKQEELVQQVRKRLEEALMADMLAHVEELARDGEAPLDKACAEDDDEEDEEEEEEEPDPDPEMEHV.

The region spanning 1–72 (MERKRWECPA…DFRTGKMLMS (72 aa)) is the MBD domain. Residues 1 to 80 (MERKRWECPA…MSKMNKSRQR (80 aa)) are required for interaction with MBD2. Position 56 is a phosphoserine (S56). A required for interaction with MBD3L2 region spans residues 60–80 (STFDFRTGKMLMSKMNKSRQR). Residue K73 forms a Glycyl lysine isopeptide (Lys-Gly) (interchain with G-Cter in SUMO2) linkage. S85 is subject to Phosphoserine. Residues K90 and K92 each participate in a glycyl lysine isopeptide (Lys-Gly) (interchain with G-Cter in SUMO2) cross-link. S144 carries the post-translational modification Phosphoserine. Residues 216–245 (KAFMVTDEDIRKQEELVQQVRKRLEEALMA) adopt a coiled-coil conformation. Residues 254–267 (LARDGEAPLDKACA) show a composition bias toward basic and acidic residues. The segment at 254–291 (LARDGEAPLDKACAEDDDEEDEEEEEEEPDPDPEMEHV) is disordered. Acidic residues predominate over residues 268-291 (EDDDEEDEEEEEEEPDPDPEMEHV).

As to quaternary structure, heterodimer (via N-terminus) with MBD2. Component of the MeCP1 histone deacetylase complex. Component of the nucleosome remodeling and deacetylase (NuRD) repressor complex, composed of core proteins MTA1, MTA2, MTA3, RBBP4, RBBP7, HDAC1, HDAC2, MBD2, MBD3, and peripherally associated proteins CDK2AP1, CDK2AP2, GATAD2A, GATAD2B, CHD3, CHD4 and CHD5. The exact stoichiometry of the NuRD complex is unknown, and some subunits such as MBD2 and MBD3, GATAD2A and GATAD2B, and CHD3, CHD4 and CHD5 define mutually exclusive NuRD complexes. Interacts with MBD3L2 (via N-terminus); the interaction is direct. Interacts with BCL6. Interacts with CDK2AP1. Interacts with HDAC1. Interacts with MTA2. Interacts with DNMT1. Interacts with GATAD2A. Interacts with GATAD2B. Does not interact with PWWP2A. Does not interact with PWWP2B.

The protein resides in the nucleus. Its subcellular location is the chromosome. Functionally, acts as a component of the histone deacetylase NuRD complex which participates in the remodeling of chromatin. Acts as transcriptional repressor and plays a role in gene silencing. Does not bind to methylated DNA by itself. Binds to a lesser degree DNA containing unmethylated CpG dinucleotides. Recruits histone deacetylases and DNA methyltransferases. This is Methyl-CpG-binding domain protein 3 (MBD3) from Homo sapiens (Human).